The primary structure comprises 433 residues: Oxaloacetate decarboxylase beta chain 2 (433 aa).

A run of 9 helical transmembrane segments spans residues 13–35, 42–64, 125–147, 160–182, 214–236, 266–288, 308–327, 339–361, and 413–432; these read LMHLGAGQAIMLLVSLLLLWLAI, LLLLPIGFGGLLSNIPEAGLALT, LFYKVAIGSGVAPLVIFMGVGAM, LLLGAAAQFGIFATVLGALTLNY, LAPELLGAIAVAAYSYMALVPLI, ILFPVVLLMLVALLLPDAAPLLG, TVQNGLINIVTIFLGLSVGA, TLGILLLGVIAFGIGTAAGVLMA, and VAGVIGSAIAAGVMLKYVLA.

This sequence belongs to the GcdB/MmdB/OadB family. In terms of assembly, heterotrimer of an alpha, a beta and a gamma subunit. Requires Na(+) as cofactor.

It is found in the cell membrane. The enzyme catalyses oxaloacetate + 2 Na(+)(in) + H(+) = pyruvate + 2 Na(+)(out) + CO2. In terms of biological role, catalyzes the decarboxylation of oxaloacetate coupled to Na(+) translocation. The protein is Oxaloacetate decarboxylase beta chain 2 (oadB2) of Salmonella typhimurium (strain LT2 / SGSC1412 / ATCC 700720).